We begin with the raw amino-acid sequence, 421 residues long: Carboxypeptidase A4 (421 aa).

The N-terminal stretch at 1-16 (MRWILFIGALIGSSIC) is a signal peptide. A propeptide spans 17–113 (GQEKFFGDQV…EMQHNEGQER (97 aa)) (activation peptide). A protein contacts are provided by proline 69, valine 71, asparagine 119, tyrosine 123, histidine 124, serine 125, glutamate 127, and phenylalanine 163. The 295-residue stretch at 122–416 (AYHSLEAIYH…LGLKTIMEHV (295 aa)) folds into the Peptidase M14 domain. Zn(2+) is bound by residues histidine 181 and glutamate 184. A protein is bound by residues arginine 196, lysine 197, and serine 248. Cysteine 250 and cysteine 273 form a disulfide bridge. N-linked (GlcNAc...) asparagine glycosylation is present at asparagine 260. Position 270 (aspartate 270) interacts with a protein. Histidine 308 contacts Zn(2+). Glutamate 382 functions as the Proton donor/acceptor in the catalytic mechanism.

It belongs to the peptidase M14 family. In terms of assembly, monomer. Interacts with LXN. Zn(2+) is required as a cofactor. Fetal expression in the adrenal gland, brain, heart, intestine, kidney, liver and lung. Except for fetal brain that shows no imprinting, expression was found preferentially from the maternal allele.

The protein localises to the secreted. Inhibited by interaction with the metallocarboxypeptidase inhibitor (MCPI) from N.versicolor that binds to the catalytic zinc ion. Also inhibited by interaction with the S.magnifica carboxypeptidase inhibitor SmCI that penetrates the active site groove and inhibits activity by emulating a C-terminal substrate. Additionally inhibited by a carboxypeptidase inhibitor from H.medicinalis (leech) and R.bursa (tick). Metalloprotease that cleaves hydrophobic C-terminal residues with a preference for -Phe, -Leu, -Ile, -Met, -Tyr and -Val. May function in peptide hormone and/or neuropeptide catabolism. This is Carboxypeptidase A4 (CPA4) from Homo sapiens (Human).